We begin with the raw amino-acid sequence, 256 residues long: 5-keto-4-deoxy-D-glucarate aldolase (256 aa).

His-50 functions as the Proton acceptor in the catalytic mechanism. Position 151 (Gln-151) interacts with substrate. Glu-153 contributes to the Mg(2+) binding site. Residues Ser-178 and Asp-179 each coordinate substrate. Residue Asp-179 participates in Mg(2+) binding.

The protein belongs to the HpcH/HpaI aldolase family. KDGluc aldolase subfamily. Homohexamer; trimer of dimers. Requires Mg(2+) as cofactor.

It catalyses the reaction 5-dehydro-4-deoxy-D-glucarate = 2-hydroxy-3-oxopropanoate + pyruvate. The enzyme catalyses 2-dehydro-3-deoxy-D-glucarate = 2-hydroxy-3-oxopropanoate + pyruvate. Its pathway is carbohydrate acid metabolism; galactarate degradation; D-glycerate from galactarate: step 2/3. Functionally, catalyzes the reversible retro-aldol cleavage of both 5-keto-4-deoxy-D-glucarate and 2-keto-3-deoxy-D-glucarate to pyruvate and tartronic semialdehyde. The chain is 5-keto-4-deoxy-D-glucarate aldolase from Escherichia coli O157:H7 (strain EC4115 / EHEC).